The primary structure comprises 315 residues: p-hydroxyphenylacetate 3-hydroxylase, reductase component (315 aa).

This sequence belongs to the non-flavoprotein flavin reductase family. Homodimer. The p-hydroxyphenylacetate 3-hydroxylase (HpaH) is composed of an oxygenase component C2 and a reductase component C1.

The catalysed reaction is a reduced flavin + NAD(+) = an oxidized flavin + NADH + 2 H(+). The protein operates within aromatic compound metabolism; 4-hydroxyphenylacetate degradation; pyruvate and succinate semialdehyde from 4-hydroxyphenylacetate: step 1/7. Flavin concentrations greater than 15 uM do not inhibit the NADH oxidation activity of the reductase component C1 but do affect the hydroxylation activity of the C1-C2 complex. Maximal reductase activity is achieved only upon HPA binding to the reductase component C1 before interaction with NADH. HPA stimulates the rates of both the reduction of FMN and release of reduced FMN from the reductase component. Its function is as follows. Reductase component of a two-component system that supplies reduced FMN (FMNH2) to the oxygenase component to catalyze the hydroxylation of 4-hydroxyphenylacetic acid, leading to the production of 3,4-dihydroxyphenylacetate (3,4-DHPA). Catalyzes the reduction of free flavins (FMN, FAD and riboflavin) by NADH. Subsequently, the reduced flavins diffuse to the oxygenase component C2. The sequence is that of p-hydroxyphenylacetate 3-hydroxylase, reductase component from Acinetobacter baumannii.